The primary structure comprises 349 residues: Protein BPS1, chloroplastic (349 aa).

A chloroplast-targeting transit peptide spans 1–43 (MARPQDPPRGFFPFGNPFKNLSSKNSVLSSKLLPLLNNFETNL).

Expressed in roots, hypocotyls, cotyledons, leaves, flowers and siliques.

It is found in the plastid. The protein localises to the chloroplast. Functionally, required for normal root and shoot development. Prevents constitutive production of a root mobile carotenoid-derived signaling compound that is capable of arresting shoot and leaf development. This chain is Protein BPS1, chloroplastic, found in Arabidopsis thaliana (Mouse-ear cress).